The primary structure comprises 173 residues: Translocon-associated protein subunit delta (173 aa).

The N-terminal stretch at Met1–Ala23 is a signal peptide. Residues Glu24–Gly144 are Lumenal-facing. Cys26 and Cys57 are joined by a disulfide. A Glycyl lysine isopeptide (Lys-Gly) (interchain with G-Cter in ubiquitin) cross-link involves residue Lys73. A helical membrane pass occupies residues Pro145 to Phe165. Residues Ser166–Ala173 lie on the Cytoplasmic side of the membrane.

It belongs to the TRAP-delta family. As to quaternary structure, heterotetramer of TRAP-alpha, TRAP-beta, TRAP-delta and TRAP-gamma.

It localises to the endoplasmic reticulum membrane. TRAP proteins are part of a complex whose function is to bind calcium to the ER membrane and thereby regulate the retention of ER resident proteins. The protein is Translocon-associated protein subunit delta (SSR4) of Homo sapiens (Human).